The primary structure comprises 372 residues: Cytochrome b (372 aa).

4 helical membrane-spanning segments follow: residues 25–45 (FGSM…FLAI), 69–90 (WMMQ…YIHI), 105–125 (WLSG…GYVL), and 170–190 (FFAL…IHIM). Positions 75 and 89 each coordinate heme b. Residues H174 and H188 each contribute to the heme b site. H193 contacts a ubiquinone. Helical transmembrane passes span 218 to 238 (HKDM…MSFN), 280 to 300 (LGGA…PFTH), 312 to 332 (LMQF…WAAT), and 339 to 358 (FTTI…IMNP).

Belongs to the cytochrome b family. The cytochrome bc1 complex contains 3 respiratory subunits (MT-CYB, CYC1 and UQCRFS1), 2 core proteins (UQCRC1 and UQCRC2) and probably 6 low-molecular weight proteins. Heme b serves as cofactor.

The protein localises to the mitochondrion inner membrane. Its function is as follows. Component of the ubiquinol-cytochrome c reductase complex (complex III or cytochrome b-c1 complex) that is part of the mitochondrial respiratory chain. The b-c1 complex mediates electron transfer from ubiquinol to cytochrome c. Contributes to the generation of a proton gradient across the mitochondrial membrane that is then used for ATP synthesis. The protein is Cytochrome b (MT-CYB) of Pantherophis bairdi (Baird's ratsnake).